The primary structure comprises 481 residues: Ammonium transporter 2 member 3 (481 aa).

Topologically, residues 1–36 are extracellular; that stretch reads MNFNSSKYISHLPESLLPNDASPEWNNKADNAWQLT. An N-linked (GlcNAc...) asparagine glycan is attached at N4. The chain crosses the membrane as a helical span at residues 37–57; sequence AATLVGLQTVPGLVILYGSMV. At 58–62 the chain is on the cytoplasmic side; the sequence is KKKWA. Residues 63 to 83 traverse the membrane as a helical segment; the sequence is VNSAFMALYAFAAVLVCWVLW. Topologically, residues 84 to 123 are extracellular; the sequence is AHHMAFGTKLLPFVGKPNFALSQKFLLSKASTNYYLPMAD. A helical transmembrane segment spans residues 124–144; that stretch reads FVFYQFAFAAITLVLLGGSLL. Over 145-151 the chain is Cytoplasmic; sequence GRMNFYA. Residues 152-172 traverse the membrane as a helical segment; sequence WMLFVPLWLTLSYTVGAFTIW. Topologically, residues 173 to 184 are extracellular; the sequence is GNGFLEGKIIDY. A helical membrane pass occupies residues 185–205; it reads AGGFVIHLSSGVAGFTAAYWV. Topologically, residues 206–220 are cytoplasmic; the sequence is GPRTSNDRQNFPPNN. The helical transmembrane segment at 221-241 threads the bilayer; sequence IIHMLGGAGFLWMGWTGFNGG. The Extracellular portion of the chain corresponds to 242–248; sequence APFQVGE. A helical membrane pass occupies residues 249–269; sequence ITSLAIFNTHLCTATSILVWI. Over 270-281 the chain is Cytoplasmic; it reads SLDMAVYKKGSL. Residues 282–302 form a helical membrane-spanning segment; that stretch reads IGSVQGMMTGLVCITPGAGLV. Topologically, residues 303 to 304 are extracellular; the sequence is DP. The helical transmembrane segment at 305–325 threads the bilayer; it reads WAAILMGALSGSIPWYTMMVL. Over 326–338 the chain is Cytoplasmic; that stretch reads HKKSPFFQSVDDT. The chain crosses the membrane as a helical span at residues 339 to 359; the sequence is LGVFHTHAVAGILGGILSGVF. The Extracellular portion of the chain corresponds to 360–363; that stretch reads AKPK. The helical transmembrane segment at 364-381 threads the bilayer; that stretch reads LLRILYGPYGSGLLYSYF. At 382–395 the chain is on the cytoplasmic side; that stretch reads DDNIGQGIKQMWYQ. A helical membrane pass occupies residues 396–416; the sequence is LLGAVFITIWNVVITSLICIL. Residues 417 to 481 are Extracellular-facing; it reads LNRFVNLRMQ…HSFPINKIDE (65 aa).

The protein belongs to the ammonia transporter channel (TC 1.A.11.2) family. In terms of tissue distribution, mostly expressed in mycorrhizal roots. Also observed in the cortex and endodermis of non-mycorrhizal roots.

The protein resides in the cell membrane. In terms of biological role, involved in ammonium transport. Required for arbuscular mycorrhizal (AM) symbiosis with AM fungi (e.g. Glomus versiforme and G.intraradices) in low nitrogen conditions. The polypeptide is Ammonium transporter 2 member 3 (Medicago truncatula (Barrel medic)).